Consider the following 193-residue polypeptide: Acyl carrier protein phosphodiesterase (193 aa).

It belongs to the AcpH family.

The enzyme catalyses holo-[ACP] + H2O = apo-[ACP] + (R)-4'-phosphopantetheine + H(+). Its function is as follows. Converts holo-ACP to apo-ACP by hydrolytic cleavage of the phosphopantetheine prosthetic group from ACP. The sequence is that of Acyl carrier protein phosphodiesterase from Serratia proteamaculans (strain 568).